Here is a 239-residue protein sequence, read N- to C-terminus: Fatty acid metabolism regulator protein (239 aa).

In terms of domain architecture, HTH gntR-type spans 6 to 74 (QSPAGFAEEY…HGKPTKINNF (69 aa)). The H-T-H motif DNA-binding region spans 34–53 (ERELSELIGVTRTTLREVLQ).

In terms of assembly, homodimer.

The protein resides in the cytoplasm. Multifunctional regulator of fatty acid metabolism. The polypeptide is Fatty acid metabolism regulator protein (Pectobacterium carotovorum subsp. carotovorum (strain PC1)).